The following is a 167-amino-acid chain: uncharacterized protein (167 aa).

4 helical membrane-spanning segments follow: residues 13 to 33 (LIYL…TWLI), 37 to 57 (VLAV…FLPY), 61 to 81 (WFAL…KIGE), and 103 to 123 (LLLI…LVPS).

The protein localises to the cell membrane. This is an uncharacterized protein from Haemophilus influenzae (strain ATCC 51907 / DSM 11121 / KW20 / Rd).